The following is a 95-amino-acid chain: Histone-like DNA-binding protein (95 aa).

Belongs to the bacterial histone-like protein family.

The chain is Histone-like DNA-binding protein from Rickettsia montanensis.